The sequence spans 365 residues: Chorismate synthase (365 aa).

Position 48 (arginine 48) interacts with NADP(+). FMN is bound by residues arginine 125–serine 127, asparagine 238–alanine 239, glycine 278, lysine 293–serine 297, and arginine 319.

It belongs to the chorismate synthase family. As to quaternary structure, homotetramer. Requires FMNH2 as cofactor.

The catalysed reaction is 5-O-(1-carboxyvinyl)-3-phosphoshikimate = chorismate + phosphate. Its pathway is metabolic intermediate biosynthesis; chorismate biosynthesis; chorismate from D-erythrose 4-phosphate and phosphoenolpyruvate: step 7/7. Its function is as follows. Catalyzes the anti-1,4-elimination of the C-3 phosphate and the C-6 proR hydrogen from 5-enolpyruvylshikimate-3-phosphate (EPSP) to yield chorismate, which is the branch point compound that serves as the starting substrate for the three terminal pathways of aromatic amino acid biosynthesis. This reaction introduces a second double bond into the aromatic ring system. This Marinomonas sp. (strain MWYL1) protein is Chorismate synthase.